A 458-amino-acid chain; its full sequence is MKNASTVSEDTASNQEPTLHRGLHNRHIQLIALGGAIGTGLFLGIGPAIQMAGPAVLLGYGVAGIIAFLIMRQLGEMVVEEPVSGSFAHFAYKYWGPFAGFLSGWNYWVMFVLVGMAELTAAGIYMQYWFPDVPTWIWAAAFFIIINAVNLVNVRLYGETEFWFALIKVLAIIGMIGFGLWLLFSGHGGEKASIDNLWRYGGFFATGWNGLILSLAVIMFSFGGLELIGITAAEARDPEKSIPKAVNQVVYRILLFYIGSLVVLLALYPWVEVKSNSSPFVMIFHNLDSNVVASALNFVILVASLSVYNSGVYSNSRMLFGLSVQGNAPKFLTRVSRRGVPINSLMLSGAITSLVVLINYLLPQKAFGLLMALVVATLLLNWIMICLAHLRFRAAMRRQGRETQFKALLYPFGNYLCIAFLGMILLLMCTMDDMRLSAILLPVWIVFLFMAFKTLRRK.

Residues 1–27 (MKNASTVSEDTASNQEPTLHRGLHNRH) are Cytoplasmic-facing. A helical membrane pass occupies residues 28-48 (IQLIALGGAIGTGLFLGIGPA). At 49 to 50 (IQ) the chain is on the periplasmic side. The helical transmembrane segment at 51-71 (MAGPAVLLGYGVAGIIAFLIM) threads the bilayer. At 72-105 (RQLGEMVVEEPVSGSFAHFAYKYWGPFAGFLSGW) the chain is on the cytoplasmic side. A helical transmembrane segment spans residues 106–126 (NYWVMFVLVGMAELTAAGIYM). Residues 127–132 (QYWFPD) lie on the Periplasmic side of the membrane. A helical membrane pass occupies residues 133–153 (VPTWIWAAAFFIIINAVNLVN). Residues 154–160 (VRLYGET) are Cytoplasmic-facing. Residues 161–181 (EFWFALIKVLAIIGMIGFGLW) form a helical membrane-spanning segment. The Periplasmic segment spans residues 182–196 (LLFSGHGGEKASIDN). Residues 197-217 (LWRYGGFFATGWNGLILSLAV) traverse the membrane as a helical segment. Residues 218-250 (IMFSFGGLELIGITAAEARDPEKSIPKAVNQVV) are Cytoplasmic-facing. A helical membrane pass occupies residues 251–271 (YRILLFYIGSLVVLLALYPWV). At 272–288 (EVKSNSSPFVMIFHNLD) the chain is on the periplasmic side. The helical transmembrane segment at 289-309 (SNVVASALNFVILVASLSVYN) threads the bilayer. Residues 310-341 (SGVYSNSRMLFGLSVQGNAPKFLTRVSRRGVP) lie on the Cytoplasmic side of the membrane. The chain crosses the membrane as a helical span at residues 342–362 (INSLMLSGAITSLVVLINYLL). Topologically, residues 363–367 (PQKAF) are periplasmic. Residues 368–388 (GLLMALVVATLLLNWIMICLA) traverse the membrane as a helical segment. At 389–411 (HLRFRAAMRRQGRETQFKALLYP) the chain is on the cytoplasmic side. Residues 412–432 (FGNYLCIAFLGMILLLMCTMD) traverse the membrane as a helical segment. At 433–434 (DM) the chain is on the periplasmic side. The chain crosses the membrane as a helical span at residues 435–455 (RLSAILLPVWIVFLFMAFKTL). Residues 456–458 (RRK) are Cytoplasmic-facing.

It belongs to the amino acid-polyamine-organocation (APC) superfamily. Amino acid transporter (AAT) (TC 2.A.3.1) family.

It localises to the cell inner membrane. The enzyme catalyses L-phenylalanine(in) + H(+)(in) = L-phenylalanine(out) + H(+)(out). Its function is as follows. Permease that is involved in the active transport across the cytoplasmic membrane of phenylalanine. Can also transport tyrosine, but not tryptophan. The sequence is that of Phenylalanine-specific permease from Escherichia coli (strain K12).